The primary structure comprises 297 residues: Formamidopyrimidine-DNA glycosylase (297 aa).

The Schiff-base intermediate with DNA role is filled by P2. The active-site Proton donor is the E3. Residue K61 is the Proton donor; for beta-elimination activity of the active site. Residues R120 and R176 each coordinate DNA. The segment at 262–296 adopts an FPG-type zinc-finger fold; sequence HVYGRQGQPCDRCGTAIVRESFMNRGSHFCPRCQR. Catalysis depends on R286, which acts as the Proton donor; for delta-elimination activity.

The protein belongs to the FPG family. In terms of assembly, monomer. Zn(2+) serves as cofactor.

The enzyme catalyses Hydrolysis of DNA containing ring-opened 7-methylguanine residues, releasing 2,6-diamino-4-hydroxy-5-(N-methyl)formamidopyrimidine.. It catalyses the reaction 2'-deoxyribonucleotide-(2'-deoxyribose 5'-phosphate)-2'-deoxyribonucleotide-DNA = a 3'-end 2'-deoxyribonucleotide-(2,3-dehydro-2,3-deoxyribose 5'-phosphate)-DNA + a 5'-end 5'-phospho-2'-deoxyribonucleoside-DNA + H(+). Functionally, involved in base excision repair of DNA damaged by oxidation or by mutagenic agents. Acts as a DNA glycosylase that recognizes and removes damaged bases. Has a preference for oxidized purines, such as 7,8-dihydro-8-oxoguanine (8-oxoG). Has AP (apurinic/apyrimidinic) lyase activity and introduces nicks in the DNA strand. Cleaves the DNA backbone by beta-delta elimination to generate a single-strand break at the site of the removed base with both 3'- and 5'-phosphates. The sequence is that of Formamidopyrimidine-DNA glycosylase from Leifsonia xyli subsp. xyli (strain CTCB07).